The sequence spans 402 residues: S-adenosylmethionine synthase (402 aa).

His-15 lines the ATP pocket. Mg(2+) is bound at residue Asp-17. K(+) is bound at residue Glu-43. The L-methionine site is built by Glu-56 and Gln-99. The tract at residues 99–109 is flexible loop; the sequence is QSPDIAQGVDT. ATP is bound by residues 174 to 176, 247 to 248, Asp-256, 262 to 263, Ala-279, and Lys-283; these read DGK, RF, and RK. Asp-256 contacts L-methionine. Lys-287 provides a ligand contact to L-methionine.

It belongs to the AdoMet synthase family. As to quaternary structure, homotetramer; dimer of dimers. Mg(2+) serves as cofactor. It depends on K(+) as a cofactor.

The protein resides in the cytoplasm. The catalysed reaction is L-methionine + ATP + H2O = S-adenosyl-L-methionine + phosphate + diphosphate. It functions in the pathway amino-acid biosynthesis; S-adenosyl-L-methionine biosynthesis; S-adenosyl-L-methionine from L-methionine: step 1/1. Its function is as follows. Catalyzes the formation of S-adenosylmethionine (AdoMet) from methionine and ATP. The overall synthetic reaction is composed of two sequential steps, AdoMet formation and the subsequent tripolyphosphate hydrolysis which occurs prior to release of AdoMet from the enzyme. The sequence is that of S-adenosylmethionine synthase from Streptomyces avermitilis (strain ATCC 31267 / DSM 46492 / JCM 5070 / NBRC 14893 / NCIMB 12804 / NRRL 8165 / MA-4680).